Here is a 339-residue protein sequence, read N- to C-terminus: FR-33289 synthase (339 aa).

3 residues coordinate Fe(2+): histidine 150, aspartate 152, and histidine 288.

Belongs to the TfdA dioxygenase family. Homodimer. Requires Fe(2+) as cofactor.

It carries out the reaction 3-(N-acetyl-N-hydroxy)aminopropylphosphonate + 2-oxoglutarate + O2 = (R)-(3-(acetylhydroxyamino)-2-hydroxypropyl)phosphonate + succinate + CO2. It participates in antibiotic biosynthesis. Functionally, monooxygenase involved in the biosynthesis of the phosphonate antibiotic FR-33289, an antimalarial agent. Catalyzes the oxidative decarboxylation of the antibiotic FR-900098 (3-(N-acetyl-N-hydroxy)aminopropylphosphonate) to form FR-33289 ((R)-(3-(acetylhydroxyamino)-2-hydroxypropyl)phosphonate). This Streptomyces rubellomurinus (strain ATCC 31215) protein is FR-33289 synthase.